Consider the following 412-residue polypeptide: Argininosuccinate synthase (412 aa).

Residues 10-18 (AYSGGLDTS) and alanine 36 each bind ATP. L-citrulline-binding residues include tyrosine 87 and serine 92. Phosphotyrosine is present on tyrosine 87. Lysine 112 carries the post-translational modification N6-acetyllysine. The residue at position 113 (tyrosine 113) is a Phosphotyrosine. 115–123 (SHGATGKGN) provides a ligand contact to ATP. L-aspartate-binding residues include threonine 119, asparagine 123, and aspartate 124. Asparagine 123 contacts L-citrulline. Position 127 (arginine 127) interacts with L-citrulline. N6-acetyllysine; by CLOCK occurs at positions 165 and 176. Serine 177 and serine 180 each carry phosphoserine. 2 residues coordinate L-citrulline: serine 180 and serine 189. Serine 219 is subject to Phosphoserine. Glutamate 270 and tyrosine 282 together coordinate L-citrulline.

The protein belongs to the argininosuccinate synthase family. Type 1 subfamily. Homotetramer. Interacts with NMRAL1. Interacts with CLOCK; in a circadian manner. Forms tissue-specific complexes with ASL, SLC7A1, HSP90AA1 and nitric oxide synthase NOS1, NOS2 or NOS3; the complex regulates cell-autonomous L-arginine synthesis and citrulline recycling while channeling extracellular L-arginine to nitric oxide synthesis pathway. Acetylated by CLOCK in a circadian manner which negatively regulates its enzyme activity. Deacetylated by histone deacetylases. As to expression, widely expressed.

The protein resides in the cytoplasm. It is found in the cytosol. It catalyses the reaction L-citrulline + L-aspartate + ATP = 2-(N(omega)-L-arginino)succinate + AMP + diphosphate + H(+). Its pathway is amino-acid biosynthesis; L-arginine biosynthesis; L-arginine from L-ornithine and carbamoyl phosphate: step 2/3. The protein operates within nitrogen metabolism; urea cycle; (N(omega)-L-arginino)succinate from L-aspartate and L-citrulline: step 1/1. In terms of biological role, one of the enzymes of the urea cycle, the metabolic pathway transforming neurotoxic amonia produced by protein catabolism into inocuous urea in the liver of ureotelic animals. Catalyzes the formation of arginosuccinate from aspartate, citrulline and ATP and together with ASL it is responsible for the biosynthesis of arginine in most body tissues. This Mus musculus (Mouse) protein is Argininosuccinate synthase.